A 727-amino-acid polypeptide reads, in one-letter code: ADP-ribosylation factor-binding protein GGA3 (727 aa).

The region spanning 16-146 is the VHS domain; the sequence is ATNPSNRQED…MLKRQGIVQS (131 aa). 2 positions are modified to phosphoserine: Ser159 and Ser275. The GAT domain maps to 171-298; sequence DEEKSKLLAK…VINSYKTIIE (128 aa). The interval 299–597 is unstructured hinge; it reads GQIINGEVTT…VHVPLESIKP (299 aa). The disordered stretch occupies residues 334 to 385; the sequence is TPSSSSPVLAPAPAPPTSGIPILPPPPQTSGPPRSRSSSQAEAPSGPDSTNN. Residues 343-363 show a composition bias toward pro residues; sequence APAPAPPTSGIPILPPPPQTS. Residues 364-374 are compositionally biased toward low complexity; it reads GPPRSRSSSQA. A DXXLL motif is present at residues 391-395; sequence DEELL. Residues 400 to 419 are disordered; sequence SDPAPTAPKESAGNSPWHLF. Positions 598–719 constitute a GAE domain; the sequence is SSALPVTAYD…TELGEVDQFP (122 aa).

It belongs to the GGA protein family. In terms of assembly, monomer. Interacts with GGA1 and GGA2. Binds to clathrin and activated ARFs, such as ARF1, ARF5 and ARF6. Binds RABEP1 and RABGEF1. Interacts with the membrane proteins M6PR/CD-MPR and IGF2R/CI-MPR and the accessory proteins SYNRG, EPN4, NECAP1, NECAP2 and AFTPH/aftiphilin. Interacts with TSG101 and UBC. Interacts with ADRA2B. Interacts with NTRK1; the interaction is independent of NTRK1 activation and ubiquitination. Interacts (via VHS domain) with BACE1 (via DXXLL motif). In terms of processing, phosphorylated by CK2 and dephosphorylated by PP2A. Phosphorylation of GGA3 allows the internal DXXLL motif to bind the VHS domain and to inhibit the recognition of cargo signals. Ubiquitinated. Post-translationally, proteolytically cleaved during apoptosis by CASP3.

It is found in the golgi apparatus. The protein localises to the trans-Golgi network membrane. Its subcellular location is the endosome membrane. The protein resides in the early endosome membrane. It localises to the recycling endosome membrane. Functionally, plays a role in protein sorting and trafficking between the trans-Golgi network (TGN) and endosomes. Mediates the ARF-dependent recruitment of clathrin to the TGN and binds ubiquitinated proteins and membrane cargo molecules with a cytosolic acidic cluster-dileucine (DXXLL) motif. Mediates export of the GPCR receptor ADRA2B to the cell surface. Involved in BACE1 transport and sorting as well as regulation of BACE1 protein levels. Regulates retrograde transport of BACE1 from endosomes to the trans-Golgi network via interaction through the VHS motif and dependent of BACE1 phosphorylation. Modulates BACE1 protein levels independently of the interaction between VHS domain and DXXLL motif through recognition of ubiquitination. Key player in a novel DXXLL-mediated endosomal sorting machinery to the recycling pathway that targets NTRK1 to the plasma membrane. In Rattus norvegicus (Rat), this protein is ADP-ribosylation factor-binding protein GGA3.